Consider the following 247-residue polypeptide: Phosphoribosylaminoimidazole-succinocarboxamide synthase (247 aa).

Belongs to the SAICAR synthetase family.

It catalyses the reaction 5-amino-1-(5-phospho-D-ribosyl)imidazole-4-carboxylate + L-aspartate + ATP = (2S)-2-[5-amino-1-(5-phospho-beta-D-ribosyl)imidazole-4-carboxamido]succinate + ADP + phosphate + 2 H(+). Its pathway is purine metabolism; IMP biosynthesis via de novo pathway; 5-amino-1-(5-phospho-D-ribosyl)imidazole-4-carboxamide from 5-amino-1-(5-phospho-D-ribosyl)imidazole-4-carboxylate: step 1/2. The protein is Phosphoribosylaminoimidazole-succinocarboxamide synthase of Herpetosiphon aurantiacus (strain ATCC 23779 / DSM 785 / 114-95).